Consider the following 111-residue polypeptide: uncharacterized protein (111 aa).

Helical transmembrane passes span 18 to 38 and 42 to 62; these read LNVF…LFVS and LALA…RTFP.

It is found in the membrane. This is an uncharacterized protein from Saccharomyces cerevisiae (strain ATCC 204508 / S288c) (Baker's yeast).